The following is a 732-amino-acid chain: Catalase-peroxidase (732 aa).

Over residues 1-11 (MDAKTDDKDGG) the composition is skewed to basic and acidic residues. Residues 1-24 (MDAKTDDKDGGKCPFPHGGGRGRR) are disordered. Residues 97–219 (WHSAGTYRTT…LGAVQMGLIY (123 aa)) constitute a cross-link (tryptophyl-tyrosyl-methioninium (Trp-Tyr) (with M-245)). His98 (proton acceptor) is an active-site residue. Positions 219 to 245 (YVNPEGPNGNPDPVAAAKDIRETFARM) form a cross-link, tryptophyl-tyrosyl-methioninium (Tyr-Met) (with W-97). His260 is a heme b binding site.

This sequence belongs to the peroxidase family. Peroxidase/catalase subfamily. Homodimer or homotetramer. Heme b is required as a cofactor. Post-translationally, formation of the three residue Trp-Tyr-Met cross-link is important for the catalase, but not the peroxidase activity of the enzyme.

It carries out the reaction H2O2 + AH2 = A + 2 H2O. It catalyses the reaction 2 H2O2 = O2 + 2 H2O. Its function is as follows. Bifunctional enzyme with both catalase and broad-spectrum peroxidase activity. The polypeptide is Catalase-peroxidase (Rhodopseudomonas palustris (strain HaA2)).